We begin with the raw amino-acid sequence, 214 residues long: Adenylate kinase (214 aa).

An ATP-binding site is contributed by 10–15 (GAGKGT). Residues 30 to 59 (STGDMLRAAVKAGSELGLKAKEIMDAGKLV) form an NMP region. Residues T31, R36, 57–59 (KLV), 85–88 (GFPR), and Q92 each bind AMP. Residues 122–159 (GRRVHAPSGRVYHVTFNPPRVEGKDDMTGEELTTRKDD) form an LID region. ATP is bound by residues R123 and 132 to 133 (VY). Residues R156 and R167 each coordinate AMP. R200 serves as a coordination point for ATP.

It belongs to the adenylate kinase family. Monomer.

Its subcellular location is the cytoplasm. The enzyme catalyses AMP + ATP = 2 ADP. It functions in the pathway purine metabolism; AMP biosynthesis via salvage pathway; AMP from ADP: step 1/1. Catalyzes the reversible transfer of the terminal phosphate group between ATP and AMP. Plays an important role in cellular energy homeostasis and in adenine nucleotide metabolism. The polypeptide is Adenylate kinase (Erwinia tasmaniensis (strain DSM 17950 / CFBP 7177 / CIP 109463 / NCPPB 4357 / Et1/99)).